The sequence spans 498 residues: Glycerol kinase (498 aa).

Thr-13 lines the ADP pocket. Positions 13, 14, and 15 each coordinate ATP. Thr-13 is a binding site for sn-glycerol 3-phosphate. Arg-17 is an ADP binding site. Residues Arg-83, Glu-84, Tyr-135, and Asp-244 each contribute to the sn-glycerol 3-phosphate site. Residues Arg-83, Glu-84, Tyr-135, Asp-244, and Gln-245 each contribute to the glycerol site. Positions 266 and 309 each coordinate ADP. Residues Thr-266, Gly-309, Gln-313, and Gly-410 each coordinate ATP. ADP-binding residues include Gly-410 and Asn-414.

The protein belongs to the FGGY kinase family.

It catalyses the reaction glycerol + ATP = sn-glycerol 3-phosphate + ADP + H(+). Its pathway is polyol metabolism; glycerol degradation via glycerol kinase pathway; sn-glycerol 3-phosphate from glycerol: step 1/1. Its activity is regulated as follows. Inhibited by fructose 1,6-bisphosphate (FBP). Its function is as follows. Key enzyme in the regulation of glycerol uptake and metabolism. Catalyzes the phosphorylation of glycerol to yield sn-glycerol 3-phosphate. This Koribacter versatilis (strain Ellin345) protein is Glycerol kinase.